Consider the following 80-residue polypeptide: Protein CEBPZOS (80 aa).

The helical transmembrane segment at 15–31 threads the bilayer; that stretch reads GVLAAELVGVAGAYCLF.

Its subcellular location is the mitochondrion membrane. The sequence is that of Protein CEBPZOS from Mus musculus (Mouse).